Reading from the N-terminus, the 207-residue chain is Acyl-homoserine-lactone synthase (207 aa).

Belongs to the autoinducer synthase family.

It catalyses the reaction a fatty acyl-[ACP] + S-adenosyl-L-methionine = an N-acyl-L-homoserine lactone + S-methyl-5'-thioadenosine + holo-[ACP] + H(+). In terms of biological role, required for the synthesis of N-butanoyl-L-homoserine lactone (BHL), an autoinducer molecule which binds to AsaR. This Aeromonas salmonicida protein is Acyl-homoserine-lactone synthase (asaI).